The chain runs to 275 residues: Putative pyruvate, phosphate dikinase regulatory protein (275 aa).

Position 149-156 (149-156 (GVSRTSKT)) interacts with ADP.

Belongs to the pyruvate, phosphate/water dikinase regulatory protein family. PDRP subfamily.

It carries out the reaction N(tele)-phospho-L-histidyl/L-threonyl-[pyruvate, phosphate dikinase] + ADP = N(tele)-phospho-L-histidyl/O-phospho-L-threonyl-[pyruvate, phosphate dikinase] + AMP + H(+). The enzyme catalyses N(tele)-phospho-L-histidyl/O-phospho-L-threonyl-[pyruvate, phosphate dikinase] + phosphate + H(+) = N(tele)-phospho-L-histidyl/L-threonyl-[pyruvate, phosphate dikinase] + diphosphate. Bifunctional serine/threonine kinase and phosphorylase involved in the regulation of the pyruvate, phosphate dikinase (PPDK) by catalyzing its phosphorylation/dephosphorylation. This chain is Putative pyruvate, phosphate dikinase regulatory protein, found in Levilactobacillus brevis (strain ATCC 367 / BCRC 12310 / CIP 105137 / JCM 1170 / LMG 11437 / NCIMB 947 / NCTC 947) (Lactobacillus brevis).